An 878-amino-acid polypeptide reads, in one-letter code: Phosphoenolpyruvate carboxylase (878 aa).

Residues His140 and Lys545 contribute to the active site.

This sequence belongs to the PEPCase type 1 family. Requires Mg(2+) as cofactor.

It catalyses the reaction oxaloacetate + phosphate = phosphoenolpyruvate + hydrogencarbonate. Forms oxaloacetate, a four-carbon dicarboxylic acid source for the tricarboxylic acid cycle. The protein is Phosphoenolpyruvate carboxylase of Pseudomonas paraeruginosa (strain DSM 24068 / PA7) (Pseudomonas aeruginosa (strain PA7)).